A 394-amino-acid polypeptide reads, in one-letter code: Actin-related protein 2 (394 aa).

Met-1 bears the N-acetylmethionine mark. Residues Gly-160–Gly-162 and Arg-214–Glu-218 each bind ATP. Lys-299 is modified (N6-acetyllysine). Gly-305–Tyr-310 is a binding site for ATP. Position 322 is an N6-acetyllysine (Lys-322).

Belongs to the actin family. ARP2 subfamily. In terms of assembly, component of the Arp2/3 complex composed of ACTR2/ARP2, ACTR3/ARP3, ARPC1B/p41-ARC, ARPC2/p34-ARC, ARPC3/p21-ARC, ARPC4/p20-ARC and ARPC5/p16-ARC. Interacts with AVIL.

Its subcellular location is the cytoplasm. It is found in the cytoskeleton. The protein localises to the cell projection. The protein resides in the nucleus. Functionally, ATP-binding component of the Arp2/3 complex, a multiprotein complex that mediates actin polymerization upon stimulation by nucleation-promoting factor (NPF). The Arp2/3 complex mediates the formation of branched actin networks in the cytoplasm, providing the force for cell motility. Seems to contact the pointed end of the daughter actin filament. In podocytes, required for the formation of lamellipodia downstream of AVIL and PLCE1 regulation. In addition to its role in the cytoplasmic cytoskeleton, the Arp2/3 complex also promotes actin polymerization in the nucleus, thereby regulating gene transcription and repair of damaged DNA. The Arp2/3 complex promotes homologous recombination (HR) repair in response to DNA damage by promoting nuclear actin polymerization, leading to drive motility of double-strand breaks (DSBs). This is Actin-related protein 2 (ACTR2) from Pongo abelii (Sumatran orangutan).